Here is a 46-residue protein sequence, read N- to C-terminus: Mu-segestritoxin-Sf1f (46 aa).

Intrachain disulfides connect Cys3-Cys19, Cys10-Cys22, Cys18-Cys42, and Cys24-Cys40. Residues 31 to 33 are keys region for toxin activity; sequence RPW.

It belongs to the neurotoxin 16 (SFI) family. As to expression, expressed by the venom gland.

The protein localises to the secreted. Its function is as follows. Insecticidal toxin. It inhibits insect voltage-gated sodium channels (Nav) by partially blocking the channel pore in DUM neurons from the American cockroach, not by acting as a gating modifier. The inhibition is only partially reversible after prolonged washout. In vivo, the toxin causes flaccid paralysis followed by death when injected into Heliothis virescens larvae. It also causes uncoordinated movements followed by full paralysis to sheep blowflies (Lucilia cuprina). When the toxin is fused to snowdrop lectin, it is orally active against larvae of the tomato moth (Laconobia oleracea), the rice brown planthopper (Nilaparvata lugens), and the peach-potato aphid (Myzus persicae). This Segestria florentina (Tube-web spider) protein is Mu-segestritoxin-Sf1f.